Reading from the N-terminus, the 464-residue chain is Argininosuccinate lyase (464 aa).

Belongs to the lyase 1 family. Argininosuccinate lyase subfamily.

The protein resides in the cytoplasm. The catalysed reaction is 2-(N(omega)-L-arginino)succinate = fumarate + L-arginine. The protein operates within amino-acid biosynthesis; L-arginine biosynthesis; L-arginine from L-ornithine and carbamoyl phosphate: step 3/3. The sequence is that of Argininosuccinate lyase from Pseudomonas aeruginosa (strain ATCC 15692 / DSM 22644 / CIP 104116 / JCM 14847 / LMG 12228 / 1C / PRS 101 / PAO1).